The primary structure comprises 98 residues: Alpha-defensin 1 (98 aa).

The N-terminal stretch at 1 to 19 (MRTLTLLTALLLLALQVQT) is a signal peptide. A propeptide spanning residues 20 to 63 (QSLEETADQVPAQDQPGAEAQDITISFAGDERSAREASKSLIGT) is cleaved from the precursor. 3 disulfide bridges follow: cysteine 66–cysteine 96, cysteine 68–cysteine 84, and cysteine 74–cysteine 95.

Belongs to the alpha-defensin family. As to expression, paneth cells of the small bowel.

It is found in the secreted. Its function is as follows. Has broad-spectrum antimicrobial properties. The antimicrobial activity decreases in the present of salt in vitro. Binds anionic phospholipids, which leads to the aggregation of liposomes in vitro. Membrane permeabilization of the target cells is an essential part of the peptide's mode of antimicrobial activity. No hemolytic activity against sheep or horse erythrocytes. Has antibacterial activity against the bacterial horse pathogens Gram-positive R.equi ATCC 33701 P(-) (minimum bactericidal concentration or MBC=5 ug/ml) and R.equi ATCC 33701 P(+) (MBC=5 ug/ml), which are resistant against beta-lactam antibiotics. Also has antibacterial activity against highly infectious wild-type strain R.equi 85F P(+) (MBC=5 ug/ml), S.equi subsp. equi (MBC=5 ug/ml), S.equi subsp. zooepidemicus (MBC=5 ug/ml), S.dysgalactiae subsp. equisimilis (MBC=10 ug/ml), S.choleraesuis subsp. choleraesuis serovar Typhimurium (MBC=10 ug/ml), and P.multocida subsp. multocida (MBC=&gt;10 ug/ml). Probably contributes to the antimicrobial barrier function of the small bowel mucosa. The chain is Alpha-defensin 1 from Equus caballus (Horse).